The chain runs to 442 residues: UDP-N-acetylmuramate--L-alanine ligase (442 aa).

109–115 (GAHGKTS) is a binding site for ATP.

The protein belongs to the MurCDEF family.

It is found in the cytoplasm. The enzyme catalyses UDP-N-acetyl-alpha-D-muramate + L-alanine + ATP = UDP-N-acetyl-alpha-D-muramoyl-L-alanine + ADP + phosphate + H(+). The protein operates within cell wall biogenesis; peptidoglycan biosynthesis. Cell wall formation. This is UDP-N-acetylmuramate--L-alanine ligase from Streptococcus pyogenes serotype M3 (strain SSI-1).